Here is a 422-residue protein sequence, read N- to C-terminus: Carboxypeptidase B2 (422 aa).

The N-terminal stretch at 1–21 (MKLYGLGVLVAIILYEKHGLA) is a signal peptide. The propeptide at 22-113 (FQSGHVLSAL…QTSNDTVSPR (92 aa)) is activation peptide. N-linked (GlcNAc...) asparagine glycosylation is found at Asn-43, Asn-72, Asn-84, and Asn-107. The Peptidase M14 domain maps to 121-418 (QYHSLNEIYS…AAVSKIAWHV (298 aa)). Residues Cys-177 and Cys-190 are joined by a disulfide bond. Positions 180 and 183 each coordinate Zn(2+). Substrate contacts are provided by residues 180-183 (HARE) and Arg-238. The N-linked (GlcNAc...) asparagine glycan is linked to Asn-240. Disulfide bonds link Cys-249-Cys-273 and Cys-264-Cys-278. 255–256 (NR) lines the substrate pocket. His-309 lines the Zn(2+) pocket. Residue 310–311 (SY) participates in substrate binding. N-linked (GlcNAc...) asparagine glycosylation is present at Asn-322. Tyr-362 provides a ligand contact to substrate. The active-site Proton donor/acceptor is the Glu-384.

This sequence belongs to the peptidase M14 family. Zn(2+) is required as a cofactor. Plasma; synthesized in the liver.

It localises to the secreted. It carries out the reaction Release of C-terminal Arg and Lys from a polypeptide.. Its activity is regulated as follows. TAFI/CPB2 is unique among carboxypeptidases in that it spontaneously inactivates with a short half-life, a property that is crucial for its role in controlling blood clot lysis. The zymogen is stabilized by interactions with the activation peptide. Release of the activation peptide increases a dynamic flap mobility and in time this leads to conformational changes that disrupt the catalytic site and expose a cryptic thrombin-cleavage site present at Arg-323. Functionally, cleaves C-terminal arginine or lysine residues from biologically active peptides such as kinins or anaphylatoxins in the circulation thereby regulating their activities. Down-regulates fibrinolysis by removing C-terminal lysine residues from fibrin that has already been partially degraded by plasmin. The protein is Carboxypeptidase B2 (Cpb2) of Rattus norvegicus (Rat).